The sequence spans 176 residues: Inner membrane-spanning protein YciB (176 aa).

5 helical membrane passes run 3-23 (FLFDLFPIILFFAAFKLWGIF), 49-69 (TMLWVSLGVIVVFGGATLVLH), 72-92 (KFIQWKPTVLYWLFAVGLVAA), 118-138 (KLNLAWAAFFAALGVTNLYVV), and 149-169 (FKLFGTTGAIIVFVILQSLWL).

This sequence belongs to the YciB family.

It is found in the cell inner membrane. Functionally, plays a role in cell envelope biogenesis, maintenance of cell envelope integrity and membrane homeostasis. This Burkholderia thailandensis (strain ATCC 700388 / DSM 13276 / CCUG 48851 / CIP 106301 / E264) protein is Inner membrane-spanning protein YciB.